We begin with the raw amino-acid sequence, 112 residues long: Protein FAM32A (112 aa).

Positions 23–56 are disordered; that stretch reads TKRKKKKKDKDKAKMLEAMGTSKKSEEEKRRCLD. The segment covering 45-56 has biased composition (basic and acidic residues); the sequence is KKSEEEKRRCLD.

This sequence belongs to the FAM32 family. In terms of tissue distribution, widely expressed, with highest level in pancreas and lowest in muscle.

The protein localises to the nucleus. Its function is as follows. May induce G2 arrest and apoptosis. May also increase cell sensitivity to apoptotic stimuli. In cell lines, may play a role in the inhibition of anchor-independent cell growth. The chain is Protein FAM32A (Fam32a) from Mus musculus (Mouse).